A 732-amino-acid polypeptide reads, in one-letter code: Exonuclease 1 (732 aa).

The tract at residues 1 to 99 is N-domain; that stretch reads MGITGLIPFV…KRRRDSRKQS (99 aa). Aspartate 30, aspartate 78, glutamate 150, aspartate 152, aspartate 171, aspartate 173, and aspartate 226 together coordinate Mg(2+). Residues 138-230 form an I-domain region; sequence RSRNVDCIVA…ILSGCDYLDS (93 aa). Disordered regions lie at residues 422–471, 524–625, and 661–716; these read YSFK…QRSP, DEQT…TNST, and SCSS…VSQN. Residues serine 431 and serine 433 each carry the phosphoserine modification. The segment covering 432 to 442 has biased composition (basic and acidic residues); sequence PSREDSVDQER. Phosphothreonine is present on threonine 443. Position 447 is a phosphoserine (serine 447). Basic and acidic residues-rich tracts occupy residues 457–467 and 525–537; these read FAKERTGEEAN and EQTRLQREHLRDT. 2 stretches are compositionally biased toward polar residues: residues 572–593 and 608–625; these read RCSSQISDGETDTDTTASSLLE and DLNNSQPQIPTEGNTNST. Residues 661–677 are compositionally biased toward low complexity; that stretch reads SCSSDQRASSTSSSSQQ. Residues 703-716 show a composition bias toward polar residues; the sequence is KSRTNGKLGAVSQN.

It belongs to the XPG/RAD2 endonuclease family. EXO1 subfamily. Mg(2+) is required as a cofactor. In terms of tissue distribution, specifically expressed in the female germline.

The protein localises to the nucleus. 5'-&gt;3' double-stranded DNA exonuclease which may also contain a cryptic 3'-&gt;5' double-stranded DNA exonuclease activity. Also exhibits endonuclease activity against 5'-overhanging flap structures similar to those generated by displacement synthesis when DNA polymerase encounters the 5'-end of a downstream Okazaki fragment. Required for DNA mismatch repair (MMR). This Drosophila melanogaster (Fruit fly) protein is Exonuclease 1 (tos).